The sequence spans 408 residues: MKYNIVLKFEVEGIVDKPDVIGAIFGQTENLFGEEFDLRELQDKGRLGRIYVNINTSKNKTEGEIIIPSNLDRIETALIAAMVENVDKVGPYNARFKLVEIQDIREEKIKKIIDRAKEILGTWTKEKTLDIKEVIYEISSAVKTGEIIEYGPDRLPAGPDVDKDPELIIVEGRADVINLLRYGYKNVIAIEGATGKIPQTIIDLAKQKKTVIAFLDGDHGGDLILKELLANNVKIDYVARAPTGKEVEELTGKEINKSLANMMTVAQYMKKQQEAQQALKEALAPESQPPIVVSKPTTPEQIKEITIKIPQHIIEEIKKLPGTLEGIMFDENWNPIERIQVRDIVQRLENLTDNQNISYIIFDGVITQRLLDLASAKNIKLLVGARIGGISKRPKNVEILTMTDLFTS.

Residues 165–243 (PELIIVEGRA…KIDYVARAPT (79 aa)) form the Toprim domain. Mg(2+)-binding residues include Glu171, Asp216, and Asp218.

This sequence belongs to the archaeal DnaG primase family. In terms of assembly, forms a ternary complex with MCM helicase and DNA. Component of the archaeal exosome complex. Mg(2+) serves as cofactor.

The enzyme catalyses ssDNA + n NTP = ssDNA/pppN(pN)n-1 hybrid + (n-1) diphosphate.. Its function is as follows. RNA polymerase that catalyzes the synthesis of short RNA molecules used as primers for DNA polymerase during DNA replication. Also part of the exosome, which is a complex involved in RNA degradation. Acts as a poly(A)-binding protein that enhances the interaction between heteromeric, adenine-rich transcripts and the exosome. The sequence is that of DNA primase DnaG from Sulfurisphaera tokodaii (strain DSM 16993 / JCM 10545 / NBRC 100140 / 7) (Sulfolobus tokodaii).